The primary structure comprises 315 residues: 4-diphosphocytidyl-2-C-methyl-D-erythritol kinase (315 aa).

Residue Lys10 is part of the active site. 107-117 (PVAGGMAGGSA) serves as a coordination point for ATP. Residue Asp148 is part of the active site. A disordered region spans residues 292-315 (HPATSPVPGPAKNRGAHIVSIESE).

It belongs to the GHMP kinase family. IspE subfamily.

The enzyme catalyses 4-CDP-2-C-methyl-D-erythritol + ATP = 4-CDP-2-C-methyl-D-erythritol 2-phosphate + ADP + H(+). Its pathway is isoprenoid biosynthesis; isopentenyl diphosphate biosynthesis via DXP pathway; isopentenyl diphosphate from 1-deoxy-D-xylulose 5-phosphate: step 3/6. Its function is as follows. Catalyzes the phosphorylation of the position 2 hydroxy group of 4-diphosphocytidyl-2C-methyl-D-erythritol. The sequence is that of 4-diphosphocytidyl-2-C-methyl-D-erythritol kinase from Corynebacterium efficiens (strain DSM 44549 / YS-314 / AJ 12310 / JCM 11189 / NBRC 100395).